A 70-amino-acid chain; its full sequence is uncharacterized protein (70 aa).

The helical transmembrane segment at 15–37 (IFAFLLFRLCKFCCVFCCALCNV) threads the bilayer.

It is found in the membrane. This is an uncharacterized protein from Dictyostelium discoideum (Social amoeba).